The primary structure comprises 59 residues: MIVLGWMFFVGLVCYMGTFPELMPPTLKWQERWPVQESKTQLRRRALGEDLLQNHVEGI.

Over Met-1–Trp-6 the chain is Mitochondrial intermembrane. The next 2 membrane-spanning stretches (helical) occupy residues Ile-2 to Leu-22 and Met-7 to Met-23. Topologically, residues Pro-24–Thr-40 are cytoplasmic.

Interacts with VDAC3.

It localises to the mitochondrion outer membrane. Regulates sperm development. May be involved in mitochondrial sheath formation. This chain is Mitochondrial sheath formation-associated protein, found in Homo sapiens (Human).